Here is a 349-residue protein sequence, read N- to C-terminus: B3 domain-containing protein At5g24050 (349 aa).

A DNA-binding region (TF-B3) is located at residues Phe-240–Ser-341.

It is found in the nucleus. This Arabidopsis thaliana (Mouse-ear cress) protein is B3 domain-containing protein At5g24050.